Consider the following 84-residue polypeptide: Large ribosomal subunit protein bL27c (84 aa).

Positions 1-23 (MAHKKGAGSTKNGRDSNAKRLGV) are disordered.

The protein belongs to the bacterial ribosomal protein bL27 family.

It is found in the plastid. The protein localises to the chloroplast. The sequence is that of Large ribosomal subunit protein bL27c from Thalassiosira pseudonana (Marine diatom).